Reading from the N-terminus, the 268-residue chain is Protein c-ets-1-B (268 aa).

Residues 131-139 (FKDYVRDRA) form a helix HI-1 region. The tract at residues 150–157 (AAALAGYT) is helix HI-2. A DNA-binding region (ETS) is located at residues 162-242 (IQLWQFLLEL…AGKRYVYRFV (81 aa)). The interval 245–249 (LQSLL) is helix H4. The segment at 253 to 259 (PEELHAM) is helix H5.

Belongs to the ETS family. As to quaternary structure, binds DNA as a homodimer; homodimerization is required for transcription activation.

The protein localises to the nucleus. It is found in the cytoplasm. With respect to regulation, autoinhibited by a module composed of four alpha helices (HI-1, HI-2, H4, and H5) that flank the DNA-binding ETS domain, reducing the affinity for DNA. Functionally, transcription factor. Directly controls the expression of cytokine and chemokine genes in a wide variety of different cellular contexts. The protein is Protein c-ets-1-B (ets1-b) of Xenopus laevis (African clawed frog).